Consider the following 867-residue polypeptide: Ent-copalyl diphosphate synthase 1, chloroplastic (867 aa).

The N-terminal 35 residues, 1–35 (MIHLHSPPTAPAAFGGAGSADWRRRRRWSWSSSSR), are a transit peptide targeting the chloroplast. The interval 1-134 (MIHLHSPPTA…ADEEADDELQ (134 aa)) is disordered. A compositionally biased stretch (basic and acidic residues) spans 51–64 (RGGDDGGGEDHHAD). A compositionally biased stretch (low complexity) spans 74 to 89 (AWRARATTAGVSSSSS). Residues 99–121 (IEHETPRITKWPNESRDLDDHQQ) are compositionally biased toward basic and acidic residues. Acidic residues predominate over residues 124 to 133 (EADEEADDEL). Lysine 286 lines the substrate pocket. The DXDD motif motif lies at 418-421 (EVDD). Lysine 504 serves as a coordination point for substrate.

Belongs to the terpene synthase family. It depends on Mg(2+) as a cofactor.

The protein localises to the plastid. The protein resides in the chloroplast. It carries out the reaction (2E,6E,10E)-geranylgeranyl diphosphate = ent-copalyl diphosphate. It participates in plant hormone biosynthesis; gibberellin biosynthesis. Its function is as follows. Catalyzes the conversion of geranylgeranyl diphosphate to the gibberellin precursor ent-copalyl diphosphate. In Oryza sativa subsp. japonica (Rice), this protein is Ent-copalyl diphosphate synthase 1, chloroplastic (CPS1).